Reading from the N-terminus, the 172-residue chain is 3-hydroxydecanoyl-[acyl-carrier-protein] dehydratase (172 aa).

His71 is a catalytic residue.

Belongs to the thioester dehydratase family. FabA subfamily. In terms of assembly, homodimer.

The protein resides in the cytoplasm. The enzyme catalyses a (3R)-hydroxyacyl-[ACP] = a (2E)-enoyl-[ACP] + H2O. It catalyses the reaction (3R)-hydroxydecanoyl-[ACP] = (2E)-decenoyl-[ACP] + H2O. It carries out the reaction (2E)-decenoyl-[ACP] = (3Z)-decenoyl-[ACP]. The protein operates within lipid metabolism; fatty acid biosynthesis. Necessary for the introduction of cis unsaturation into fatty acids. Catalyzes the dehydration of (3R)-3-hydroxydecanoyl-ACP to E-(2)-decenoyl-ACP and then its isomerization to Z-(3)-decenoyl-ACP. Can catalyze the dehydratase reaction for beta-hydroxyacyl-ACPs with saturated chain lengths up to 16:0, being most active on intermediate chain length. The sequence is that of 3-hydroxydecanoyl-[acyl-carrier-protein] dehydratase from Aliivibrio salmonicida (strain LFI1238) (Vibrio salmonicida (strain LFI1238)).